We begin with the raw amino-acid sequence, 189 residues long: Peptidyl-tRNA hydrolase (189 aa).

Tyrosine 14 serves as a coordination point for tRNA. Residue histidine 19 is the Proton acceptor of the active site. 3 residues coordinate tRNA: phenylalanine 64, asparagine 66, and asparagine 112.

Belongs to the PTH family. Monomer.

It localises to the cytoplasm. It carries out the reaction an N-acyl-L-alpha-aminoacyl-tRNA + H2O = an N-acyl-L-amino acid + a tRNA + H(+). In terms of biological role, hydrolyzes ribosome-free peptidyl-tRNAs (with 1 or more amino acids incorporated), which drop off the ribosome during protein synthesis, or as a result of ribosome stalling. Catalyzes the release of premature peptidyl moieties from peptidyl-tRNA molecules trapped in stalled 50S ribosomal subunits, and thus maintains levels of free tRNAs and 50S ribosomes. The chain is Peptidyl-tRNA hydrolase from Rhizorhabdus wittichii (strain DSM 6014 / CCUG 31198 / JCM 15750 / NBRC 105917 / EY 4224 / RW1) (Sphingomonas wittichii).